A 219-amino-acid chain; its full sequence is Small ribosomal subunit protein uS5 (219 aa).

Positions 1 to 21 (MTDQNQKANQGNGLQTTNLQA) are enriched in polar residues. Residues 1-61 (MTDQNQKANQ…NQNRRFQKPA (61 aa)) form a disordered region. Basic and acidic residues predominate over residues 35-47 (GIKKAVSKKEGGG). The 64-residue stretch at 66–129 (FEERIVKLKR…KAAHNSLHTI (64 aa)) folds into the S5 DRBM domain.

Belongs to the universal ribosomal protein uS5 family. As to quaternary structure, part of the 30S ribosomal subunit. Contacts proteins S4 and S8.

Its function is as follows. With S4 and S12 plays an important role in translational accuracy. In terms of biological role, located at the back of the 30S subunit body where it stabilizes the conformation of the head with respect to the body. This is Small ribosomal subunit protein uS5 from Mycoplasma pneumoniae (strain ATCC 29342 / M129 / Subtype 1) (Mycoplasmoides pneumoniae).